A 231-amino-acid chain; its full sequence is MSVSAIRIPANGSSAKAAVIFLHGLGDSGDGWSWLPQLVSQSKLINDPINYVFPNAPKIPVTINNGFAMPAWFDIYELGNPHAKQDVTGFFKSCEVLKEFILEQHNKFNIPLEKIIIGGFSQGAAISLATLALLDTKIGGCVALSGFCPVRNEITDRYNKNPGVNFDTPIFQGHGTVDPVINYDYGKQTSELYKQLGFKNLKFNTYEGVAHSASEEELADVIKFIKNIVEK.

Residues S121, D178, and H211 each act as charge relay system in the active site.

It belongs to the AB hydrolase superfamily. AB hydrolase 2 family.

It localises to the cytoplasm. The protein localises to the nucleus. It carries out the reaction S-hexadecanoyl-L-cysteinyl-[protein] + H2O = L-cysteinyl-[protein] + hexadecanoate + H(+). Functionally, hydrolyzes fatty acids from S-acylated cysteine residues in proteins with a strong preference for palmitoylated G-alpha proteins over other acyl substrates. Mediates the deacylation of G-alpha proteins such as GPA1 in vivo, but has weak or no activity toward palmitoylated Ras proteins. Has weak lysophospholipase activity in vitro; however such activity may not exist in vivo. The chain is Acyl-protein thioesterase 1 from Candida albicans (strain SC5314 / ATCC MYA-2876) (Yeast).